A 266-amino-acid polypeptide reads, in one-letter code: Respiratory nitrate reductase beta chain (266 aa).

2 consecutive 4Fe-4S ferredoxin-type domains span residues 3-32 (VGMVLNLDKCIGCHTCSVTCKEGMEYAWFN) and 30-61 (WFNNVESKLCEHCLNPACVATCPSGAIYKREE). [4Fe-4S] cluster contacts are provided by Cys-12, Cys-15, Cys-18, Cys-22, Cys-39, Cys-42, and Cys-47. Cys-51 and Cys-73 together coordinate [3Fe-4S] cluster. [4Fe-4S] cluster-binding residues include Cys-77, Cys-81, Cys-84, Cys-96, and Cys-100.

As to quaternary structure, heterotrimer composed of an alpha, a beta and a gamma chain. Alpha and beta are catalytic chains; gamma chains are involved in binding the enzyme complex to the cytoplasmic membrane. It depends on [4Fe-4S] cluster as a cofactor. [3Fe-4S] cluster is required as a cofactor.

It is found in the cell membrane. The protein resides in the cytoplasm. The enzyme catalyses nitrate + a quinol = a quinone + nitrite + H2O. With respect to regulation, inhibited by micromolar concentrations of azide. The nitrate reductase enzyme complex allows Bradyrhizobium sp. USDA 3045 to use nitrate as an electron acceptor during anaerobic growth. The beta chain is an electron transfer unit containing four cysteine clusters involved in the formation of iron-sulfur centers. Electrons are transferred from the gamma chain to the molybdenum cofactor of the alpha subunit. The sequence is that of Respiratory nitrate reductase beta chain (narH) from Bradyrhizobium sp.